The primary structure comprises 198 residues: ATP-dependent Clp protease proteolytic subunit (198 aa).

The active-site Nucleophile is the Ser-98. Residue His-123 is part of the active site.

It belongs to the peptidase S14 family. Fourteen ClpP subunits assemble into 2 heptameric rings which stack back to back to give a disk-like structure with a central cavity, resembling the structure of eukaryotic proteasomes.

It localises to the cytoplasm. It carries out the reaction Hydrolysis of proteins to small peptides in the presence of ATP and magnesium. alpha-casein is the usual test substrate. In the absence of ATP, only oligopeptides shorter than five residues are hydrolyzed (such as succinyl-Leu-Tyr-|-NHMec, and Leu-Tyr-Leu-|-Tyr-Trp, in which cleavage of the -Tyr-|-Leu- and -Tyr-|-Trp bonds also occurs).. Cleaves peptides in various proteins in a process that requires ATP hydrolysis. Has a chymotrypsin-like activity. Plays a major role in the degradation of misfolded proteins. The chain is ATP-dependent Clp protease proteolytic subunit from Levilactobacillus brevis (strain ATCC 367 / BCRC 12310 / CIP 105137 / JCM 1170 / LMG 11437 / NCIMB 947 / NCTC 947) (Lactobacillus brevis).